Consider the following 485-residue polypeptide: Hexokinase-1 (485 aa).

Positions 21–468 (KELMDEIHQL…SGAGAAVIAA (448 aa)) constitute a Hexokinase domain. A hexokinase small subdomain region spans residues 75-209 (TGKESGNYLA…ELPIEIVALI (135 aa)). Residues 86 to 91 (DLGGTN) and lysine 111 contribute to the ATP site. Residues serine 158, 175 to 176 (TK), 210 to 211 (ND), and asparagine 237 each bind substrate. The segment at 210–457 (NDTVGTLIAS…DPITIVPAED (248 aa)) is hexokinase large subdomain. A Phosphoserine modification is found at serine 245. Glutamate 269 lines the substrate pocket. Residue serine 272 is modified to Phosphoserine. Glutamate 302 contacts substrate. ATP contacts are provided by residues 307–308 (GY), 344–348 (TSYPA), and 419–423 (SVYNK).

It belongs to the hexokinase family. As to quaternary structure, homodimer.

It carries out the reaction a D-hexose + ATP = a D-hexose 6-phosphate + ADP + H(+). The catalysed reaction is D-fructose + ATP = D-fructose 6-phosphate + ADP + H(+). The enzyme catalyses D-glucose + ATP = D-glucose 6-phosphate + ADP + H(+). It participates in carbohydrate metabolism; hexose metabolism. It functions in the pathway carbohydrate degradation; glycolysis; D-glyceraldehyde 3-phosphate and glycerone phosphate from D-glucose: step 1/4. With respect to regulation, subject to allosteric control. Substrate inhibition by ATP. Functionally, catalyzes the phosphorylation of hexose, such as D-glucose and D-fructose, to hexose 6-phosphate (D-glucose 6-phosphate and D-fructose 6-phosphate, respectively). Mediates the initial step of glycolysis by catalyzing phosphorylation of D-glucose to D-glucose 6-phosphate. In Saccharomyces cerevisiae (strain ATCC 204508 / S288c) (Baker's yeast), this protein is Hexokinase-1 (HXK1).